Reading from the N-terminus, the 39-residue chain is Cytochrome b559 subunit beta (39 aa).

Residues 14–30 (WLTVHGLAVPTVSFLGS) traverse the membrane as a helical segment. Histidine 18 is a binding site for heme.

Belongs to the PsbE/PsbF family. In terms of assembly, heterodimer of an alpha subunit and a beta subunit. PSII is composed of 1 copy each of membrane proteins PsbA, PsbB, PsbC, PsbD, PsbE, PsbF, PsbH, PsbI, PsbJ, PsbK, PsbL, PsbM, PsbT, PsbX, PsbY, PsbZ, Psb30/Ycf12, at least 3 peripheral proteins of the oxygen-evolving complex and a large number of cofactors. It forms dimeric complexes. It depends on heme b as a cofactor.

Its subcellular location is the plastid. It localises to the chloroplast thylakoid membrane. Functionally, this b-type cytochrome is tightly associated with the reaction center of photosystem II (PSII). PSII is a light-driven water:plastoquinone oxidoreductase that uses light energy to abstract electrons from H(2)O, generating O(2) and a proton gradient subsequently used for ATP formation. It consists of a core antenna complex that captures photons, and an electron transfer chain that converts photonic excitation into a charge separation. The sequence is that of Cytochrome b559 subunit beta from Lactuca sativa (Garden lettuce).